The following is a 245-amino-acid chain: Thiopurine S-methyltransferase (245 aa).

Position 14 is a phosphoserine (Ser14). 29–40 contributes to the S-adenosyl-L-methionine binding site; the sequence is WQDKWVNGKTAF. Phe40 provides a ligand contact to substrate. N6-acetyllysine is present on Lys58. Residues Leu69, Glu90, 134-135, and Arg152 each bind S-adenosyl-L-methionine; that span reads SI.

The protein belongs to the class I-like SAM-binding methyltransferase superfamily. TPMT family. Monomer.

It localises to the cytoplasm. It carries out the reaction S-adenosyl-L-methionine + a thiopurine = S-adenosyl-L-homocysteine + a thiopurine S-methylether.. The enzyme catalyses mercaptopurine + S-adenosyl-L-methionine = 6-methylthiopurine + S-adenosyl-L-homocysteine + H(+). It catalyses the reaction 6-thioguanine + S-adenosyl-L-methionine = 6-methylthioguanine + S-adenosyl-L-homocysteine + H(+). With respect to regulation, inhibited by S-adenosyl-L-homocysteine (SAH). Functionally, catalyzes the S-methylation of thiopurine drugs such as 6-mercaptopurine (also called mercaptopurine, 6-MP or its brand name Purinethol) and 6-thioguanine (also called tioguanine or 6-TG) using S-adenosyl-L-methionine as the methyl donor. TPMT activity modulates the cytotoxic effects of thiopurine prodrugs. A natural substrate for this enzyme has yet to be identified. The polypeptide is Thiopurine S-methyltransferase (TPMT) (Homo sapiens (Human)).